The sequence spans 411 residues: MVDKSNKVALVLGATGISGWALAKNALSYPSRSTFQRVIGLMHRPRTVEETGLPNDPRLELYSGVDLQGDLNHVVVKLKEKIPRIEEVTHVYYLAYMTLQTCSGDMRQFRDANVAMTYTAVHACDRLCPNMEFFVLQTGTNAYGVACFDYLRQTQLQVPLRESNPRVPRPWSDTLFYYAQADLIKEANKGKAWKWCEVRPDQIVGHTPAQVSVPYVAPMALYLALYRYINGPGARVQFPGTVRNYHHTYTDVRPDTMARAELYLSLVKSDESHGEAFNIADTDTPGPWSAKWPSICRYFGLEASETIDDEWTDIDGWWYANQTAYERMCAEYGLQKQVMSPTAWSLMKMGHTLIDQNRELCLDKIRGLGFTEDHPVGSSYFQVFEDFERMKIIPPKVVLASPRCRDVLHQC.

The NADP(+) site is built by D105, Q137, Y249, and R253. Y249 acts as the Proton donor in catalysis. Residue Y263 is the Proton donor of the active site.

This sequence belongs to the short-chain dehydrogenases/reductases (SDR) family.

It participates in secondary metabolite biosynthesis; terpenoid biosynthesis. In terms of biological role, short chain dehydrogenase; part of the gene cluster that mediates the biosynthesis of calidodehydroaustin, a fungal meroterpenoid. The first step of the pathway is the synthesis of 3,5-dimethylorsellinic acid by the polyketide synthase ausA. 3,5-dimethylorsellinic acid is then prenylated by the polyprenyl transferase ausN. Further epoxidation by the FAD-dependent monooxygenase ausM and cyclization by the probable terpene cyclase ausL lead to the formation of protoaustinoid A. Protoaustinoid A is then oxidized to spiro-lactone preaustinoid A3 by the combined action of the FAD-binding monooxygenases ausB and ausC, and the dioxygenase ausE. Acid-catalyzed keto-rearrangement and ring contraction of the tetraketide portion of preaustinoid A3 by ausJ lead to the formation of preaustinoid A4. The aldo-keto reductase ausK, with the help of ausH, is involved in the next step by transforming preaustinoid A4 into isoaustinone which is in turn hydroxylated by the P450 monooxygenase ausI to form austinolide. The cytochrome P450 monooxygenase ausG modifies austinolide to austinol. Austinol is further acetylated to austin by the O-acetyltransferase ausP, which spontaneously changes to dehydroaustin. The cytochrome P450 monooxygenase ausR then converts dehydroaustin is into 7-dehydrodehydroaustin. The hydroxylation catalyzed by ausR permits the O-acetyltransferase ausQ to add an additional acetyl group to the molecule, leading to the formation of acetoxydehydroaustin. The short chain dehydrogenase ausT catalyzes the reduction of the double bond present between carbon atoms 1 and 2 to convert 7-dehydrodehydroaustin into 1,2-dihydro-7-hydroxydehydroaustin. AusQ catalyzes not only an acetylation reaction but also the addition of the PKS ausV diketide product to 1,2-dihydro-7-hydroxydehydroaustin, forming precalidodehydroaustin. Finally, the iron/alpha-ketoglutarate-dependent dioxygenase converts precalidodehydroaustin into calidodehydroaustin. The sequence is that of Short chain dehydrogenase ausT from Aspergillus calidoustus.